Consider the following 76-residue polypeptide: Small ribosomal subunit protein bS18 (76 aa).

Belongs to the bacterial ribosomal protein bS18 family. As to quaternary structure, part of the 30S ribosomal subunit. Forms a tight heterodimer with protein bS6.

Functionally, binds as a heterodimer with protein bS6 to the central domain of the 16S rRNA, where it helps stabilize the platform of the 30S subunit. This is Small ribosomal subunit protein bS18 from Carboxydothermus hydrogenoformans (strain ATCC BAA-161 / DSM 6008 / Z-2901).